The primary structure comprises 356 residues: Ornithine cyclodeaminase (356 aa).

Residues R53 and K77 each contribute to the L-ornithine site. Residues T92, R120, 147–148 (AQ), D169, T209, 232–235 (VGGD), K239, and S300 each bind NAD(+). R120 is an L-ornithine binding site. Residue D235 participates in L-ornithine binding. D235 (proton donor/acceptor) is an active-site residue. Position 301 (V301) interacts with L-ornithine.

This sequence belongs to the ornithine cyclodeaminase/mu-crystallin family. NAD(+) serves as cofactor.

The enzyme catalyses L-ornithine = L-proline + NH4(+). It functions in the pathway amino-acid biosynthesis; L-proline biosynthesis; L-proline from L-ornithine: step 1/1. Is inhibited by L-proline and L-lysine. Is not activated by small concentrations of L-arginine, and is even inhibited by about 50% at 0.5 mM L-arginine. Catalyzes the conversion of L-ornithine into L-proline with release of ammonia. Is involved in the utilization of octopine, a catabolic pathway that proceeds through L-arginine and L-ornithine to L-proline. Octopine is a predominant opine in plant cells transformed with Ti plasmid pTiAch5. This Agrobacterium tumefaciens (strain Ach5) protein is Ornithine cyclodeaminase.